The chain runs to 927 residues: Perchlorate reductase subunit alpha (927 aa).

The tat-type signal signal peptide spans 1-31 (MVQMTRRGFLLASGATLLGSSLSFRTLAAAA). A 4Fe-4S Mo/W bis-MGD-type domain is found at 53–116 (DKKTRGAHLI…CAHDYMYGPH (64 aa)). The [4Fe-4S] cluster site is built by H60, C64, C68, and C102. D198 contributes to the Mo-bis(molybdopterin guanine dinucleotide) binding site.

The protein belongs to the prokaryotic molybdopterin-containing oxidoreductase family. Heterotrimer of alpha, beta and gamma subunits. The cofactor is [4Fe-4S] cluster. Requires Mo-bis(molybdopterin guanine dinucleotide) as cofactor. In terms of processing, predicted to be exported by the Tat system. The position of the signal peptide cleavage has not been experimentally proven.

It is found in the periplasm. In terms of biological role, component of the perchlorate reductase that catalyzes the reduction of perchlorate to chlorite and allows anaerobic growth on perchlorate as the sole electron acceptor. Is probably also able to reduce chlorate to chlorite. The alpha subunit is likely the catalytic subunit. The chain is Perchlorate reductase subunit alpha (pcrA) from Dechloromonas aromatica (strain RCB).